A 309-amino-acid polypeptide reads, in one-letter code: Dioxygenase af480 (309 aa).

Residues His153, Asp155, and His228 each coordinate Fe cation.

Belongs to the PhyH family. Fe cation serves as cofactor.

It catalyses the reaction 5-dehydro-6-demethoxyfumagillol + 2-oxoglutarate + O2 = 5-dehydro-6-demethoxy-6-hydroxyfumagillol + succinate + CO2. It participates in secondary metabolite biosynthesis; terpenoid biosynthesis. Dioxygenase; part of the gene cluster that mediates the biosynthesis of fumagillin, a meroterpenoid that has numerous biological activities including irreversible inhibition of human type 2 methionine aminopeptidase (METAP2). Within the pathway, the dioxygenase af480 acts as a 5-dehydro-6-demethoxyfumagillol dioxygenase that hydroylates 5-keto-demethoxyfumagillol at position C-6. The pathway begins with the conversion of farnesyl pyrophosphate (FPP) to beta-trans-bergamotene by the membrane-bound beta-trans-bergamotene synthase af520. The multifunctional cytochrome P450 monooxygenase af510 then converts beta-trans-bergamotene into 5-keto-demethoxyfumagillol via several oxydation steps. 5-keto-demethoxyfumagillol is then subjected to successive C-6 hydroxylation and O-methylation by the dioxygenase af480 and O-methyltransferase af390-400, respectively, to yield 5-keto-fumagillol, which is then stereoselectively reduced by the keto-reductase af490 to 5R-hydroxy-seco-sesquiterpene. The next step is the polyketide transferase af380-catalyzed transfer of a dodecapentaenoyl group synthesized by the polyketide synthase af370 onto 5R-hydroxy-seco-sesquiterpene which leads to the production of prefumagillin. Finally, oxidative cleavage by the monooxygenase af470 converts prefumagillin to fumagillin. The chain is Dioxygenase af480 from Aspergillus fumigatus (strain ATCC MYA-4609 / CBS 101355 / FGSC A1100 / Af293) (Neosartorya fumigata).